The following is an 84-amino-acid chain: Small ribosomal subunit protein uS17 (84 aa).

This sequence belongs to the universal ribosomal protein uS17 family. In terms of assembly, part of the 30S ribosomal subunit.

Its function is as follows. One of the primary rRNA binding proteins, it binds specifically to the 5'-end of 16S ribosomal RNA. In Clostridium kluyveri (strain NBRC 12016), this protein is Small ribosomal subunit protein uS17.